We begin with the raw amino-acid sequence, 359 residues long: GDSL esterase/lipase At2g30310 (359 aa).

The N-terminal stretch at 1-28 (MSTSKTIVFGLFVATLLVSCNVAANATT) is a signal peptide. Ser-41 acts as the Nucleophile in catalysis. 2 N-linked (GlcNAc...) asparagine glycosylation sites follow: Asn-103 and Asn-325. Catalysis depends on residues Asp-333 and His-336.

The protein belongs to the 'GDSL' lipolytic enzyme family.

The protein resides in the secreted. The sequence is that of GDSL esterase/lipase At2g30310 from Arabidopsis thaliana (Mouse-ear cress).